A 380-amino-acid polypeptide reads, in one-letter code: Aminomethyltransferase (380 aa).

Belongs to the GcvT family. As to quaternary structure, the glycine cleavage system is composed of four proteins: P, T, L and H.

It catalyses the reaction N(6)-[(R)-S(8)-aminomethyldihydrolipoyl]-L-lysyl-[protein] + (6S)-5,6,7,8-tetrahydrofolate = N(6)-[(R)-dihydrolipoyl]-L-lysyl-[protein] + (6R)-5,10-methylene-5,6,7,8-tetrahydrofolate + NH4(+). The glycine cleavage system catalyzes the degradation of glycine. The chain is Aminomethyltransferase from Koribacter versatilis (strain Ellin345).